We begin with the raw amino-acid sequence, 387 residues long: 3-hydroxy-D-aspartate aldolase (387 aa).

Position 62 is an N6-(pyridoxal phosphate)lysine (K62). Pyridoxal 5'-phosphate is bound by residues Q85, T238, G256–S257, and Y265. Mg(2+)-binding residues include H355 and D357.

This sequence belongs to the DSD1 family. Homodimer. Pyridoxal 5'-phosphate is required as a cofactor. The cofactor is Mg(2+).

The catalysed reaction is (3S)-3-hydroxy-D-aspartate = glyoxylate + glycine. It catalyses the reaction (3R)-3-hydroxy-D-aspartate = glyoxylate + glycine. Its function is as follows. Catalyzes the condensation of glyoxylate and glycine into (2R,3S)-beta-hydroxyaspartate ((3S)-3-hydroxy-D-aspartate). Is essential for the growth of P.denitrificans in the presence of glycolate and glyoxylate since it functions in glyoxylate assimilation via the beta-hydroxyaspartate cycle (BHAC). Is also able to catalyze the reverse reaction in vitro, i.e. the cleavage of (3S)-3-hydroxy-D-aspartate, and that of D-threonine to a lesser extent. This Paracoccus denitrificans (strain Pd 1222) protein is 3-hydroxy-D-aspartate aldolase.